Consider the following 238-residue polypeptide: 4-hydroxy-tetrahydrodipicolinate reductase (238 aa).

12-17 (GASGRM) contacts NAD(+). NADP(+) is bound at residue arginine 40. NAD(+) contacts are provided by residues 93–95 (GTT) and 117–120 (ASNF). The active-site Proton donor/acceptor is the histidine 149. Histidine 150 contributes to the (S)-2,3,4,5-tetrahydrodipicolinate binding site. The Proton donor role is filled by lysine 153. Residue 159 to 160 (GT) coordinates (S)-2,3,4,5-tetrahydrodipicolinate.

Belongs to the DapB family.

The protein resides in the cytoplasm. It carries out the reaction (S)-2,3,4,5-tetrahydrodipicolinate + NAD(+) + H2O = (2S,4S)-4-hydroxy-2,3,4,5-tetrahydrodipicolinate + NADH + H(+). It catalyses the reaction (S)-2,3,4,5-tetrahydrodipicolinate + NADP(+) + H2O = (2S,4S)-4-hydroxy-2,3,4,5-tetrahydrodipicolinate + NADPH + H(+). The protein operates within amino-acid biosynthesis; L-lysine biosynthesis via DAP pathway; (S)-tetrahydrodipicolinate from L-aspartate: step 4/4. Its function is as follows. Catalyzes the conversion of 4-hydroxy-tetrahydrodipicolinate (HTPA) to tetrahydrodipicolinate. The polypeptide is 4-hydroxy-tetrahydrodipicolinate reductase (Xanthomonas euvesicatoria pv. vesicatoria (strain 85-10) (Xanthomonas campestris pv. vesicatoria)).